Consider the following 430-residue polypeptide: NAD(P)(+) glycohydrolase toxin Tse6 (430 aa).

3 helical membrane-spanning segments follow: residues 17–37 (FGVA…AAVV), 46–66 (LAAV…FQIV), and 193–213 (LLLA…IGGL).

Interacts with Tsi6, VgrG1a, EagT6 and EF-Tu.

The protein localises to the membrane. The catalysed reaction is NAD(+) + H2O = ADP-D-ribose + nicotinamide + H(+). Its function is as follows. Type VI secretion exported toxin that acts as a glycohydrolase on bacterial target cells and degrades the essential dinucleotides NAD(+) and NADP(+), thereby inducing bacteriostasis. The activity resides in the C-terminal region that is initially neutralized by the cognate immunity protein Tsi6. The sequence is that of NAD(P)(+) glycohydrolase toxin Tse6 from Pseudomonas aeruginosa (strain ATCC 15692 / DSM 22644 / CIP 104116 / JCM 14847 / LMG 12228 / 1C / PRS 101 / PAO1).